Consider the following 937-residue polypeptide: Molybdenum cofactor sulfurase (937 aa).

Lys237 carries the N6-(pyridoxal phosphate)lysine modification. Cys397 is an active-site residue. Disordered regions lie at residues Gly633–Leu710, Pro756–Pro795, and Lys897–Gly921. The segment covering Met638–Gln652 has biased composition (basic residues). Positions Thr682–Ser935 constitute an MOSC domain. Residues Pro756–Asn767 are compositionally biased toward low complexity. Gly residues predominate over residues Thr900–Gly921.

This sequence belongs to the class-V pyridoxal-phosphate-dependent aminotransferase family. MOCOS subfamily. Requires pyridoxal 5'-phosphate as cofactor.

The catalysed reaction is Mo-molybdopterin + L-cysteine + AH2 = thio-Mo-molybdopterin + L-alanine + A + H2O. Its pathway is cofactor biosynthesis; molybdopterin biosynthesis. In terms of biological role, sulfurates the molybdenum cofactor. Sulfation of molybdenum is essential for xanthine dehydrogenase (XDH) and aldehyde oxidase (ADO) enzymes in which molybdenum cofactor is liganded by 1 oxygen and 1 sulfur atom in active form. The sequence is that of Molybdenum cofactor sulfurase (nit-13) from Neurospora crassa (strain ATCC 24698 / 74-OR23-1A / CBS 708.71 / DSM 1257 / FGSC 987).